Here is a 242-residue protein sequence, read N- to C-terminus: ATP-dependent dethiobiotin synthetase BioD 1 (242 aa).

ATP is bound at residue 12–17; that stretch reads NVGKTT. Residue threonine 16 coordinates Mg(2+). Lysine 37 is an active-site residue. Aspartate 66 is a binding site for ATP. Residues aspartate 66 and glutamate 124 each coordinate Mg(2+). Residues 184–185, 213–215, and glutamate 220 each bind ATP; these read NR and PYL.

The protein belongs to the dethiobiotin synthetase family. As to quaternary structure, homodimer. Requires Mg(2+) as cofactor.

The protein resides in the cytoplasm. The enzyme catalyses (7R,8S)-7,8-diammoniononanoate + CO2 + ATP = (4R,5S)-dethiobiotin + ADP + phosphate + 3 H(+). Its pathway is cofactor biosynthesis; biotin biosynthesis; biotin from 7,8-diaminononanoate: step 1/2. In terms of biological role, catalyzes a mechanistically unusual reaction, the ATP-dependent insertion of CO2 between the N7 and N8 nitrogen atoms of 7,8-diaminopelargonic acid (DAPA, also called 7,8-diammoniononanoate) to form a ureido ring. This Haemophilus influenzae (strain ATCC 51907 / DSM 11121 / KW20 / Rd) protein is ATP-dependent dethiobiotin synthetase BioD 1.